A 160-amino-acid chain; its full sequence is Cytochrome b6-f complex subunit 4 (160 aa).

The next 3 membrane-spanning stretches (helical) occupy residues 36–56 (LLYV…GLAI), 95–115 (LLGI…PFIE), and 131–151 (AIFL…TFPI).

This sequence belongs to the cytochrome b family. PetD subfamily. In terms of assembly, the 4 large subunits of the cytochrome b6-f complex are cytochrome b6, subunit IV (17 kDa polypeptide, PetD), cytochrome f and the Rieske protein, while the 4 small subunits are PetG, PetL, PetM and PetN. The complex functions as a dimer.

The protein resides in the cellular thylakoid membrane. In terms of biological role, component of the cytochrome b6-f complex, which mediates electron transfer between photosystem II (PSII) and photosystem I (PSI), cyclic electron flow around PSI, and state transitions. The sequence is that of Cytochrome b6-f complex subunit 4 from Microcystis aeruginosa (strain NIES-843 / IAM M-2473).